The primary structure comprises 603 residues: uncharacterized protein (603 aa).

Positions 257–281 (AGEAASSDHDQKISRVTRKRPREPK) are disordered.

This is an uncharacterized protein from Saccharomyces cerevisiae (strain ATCC 204508 / S288c) (Baker's yeast).